The sequence spans 730 residues: Procollagen-lysine,2-oxoglutarate 5-dioxygenase 1 (730 aa).

The signal sequence occupies residues methionine 1–glycine 20. Asparagine 200, asparagine 403, and asparagine 541 each carry an N-linked (GlcNAc...) asparagine glycan. Residues glutamine 639–proline 730 enclose the Fe2OG dioxygenase domain. Fe cation is bound by residues histidine 659 and aspartate 661. Residue asparagine 689 is glycosylated (N-linked (GlcNAc...) asparagine). Histidine 711 lines the Fe cation pocket. Arginine 721 is a catalytic residue.

In terms of assembly, homodimer. Fe(2+) serves as cofactor. The cofactor is L-ascorbate.

Its subcellular location is the rough endoplasmic reticulum membrane. It carries out the reaction L-lysyl-[collagen] + 2-oxoglutarate + O2 = (5R)-5-hydroxy-L-lysyl-[collagen] + succinate + CO2. Forms hydroxylysine residues in -Xaa-Lys-Gly- sequences in collagens. These hydroxylysines serve as sites of attachment for carbohydrate units and are essential for the stability of the intermolecular collagen cross-links. The protein is Procollagen-lysine,2-oxoglutarate 5-dioxygenase 1 (PLOD1) of Gallus gallus (Chicken).